A 96-amino-acid chain; its full sequence is Small ribosomal subunit protein bS6 (96 aa).

This sequence belongs to the bacterial ribosomal protein bS6 family.

In terms of biological role, binds together with bS18 to 16S ribosomal RNA. The chain is Small ribosomal subunit protein bS6 from Acidothermus cellulolyticus (strain ATCC 43068 / DSM 8971 / 11B).